The chain runs to 126 residues: Fluoride-specific ion channel FluC (126 aa).

Helical transmembrane passes span 4–24 (ILAI…IGLW), 35–55 (YGTF…LTLI), 68–88 (MLVT…YESF), and 100–120 (IGYM…GVGL). Glycine 75 and threonine 78 together coordinate Na(+).

Belongs to the fluoride channel Fluc/FEX (TC 1.A.43) family.

It is found in the cell membrane. It catalyses the reaction fluoride(in) = fluoride(out). Na(+) is not transported, but it plays an essential structural role and its presence is essential for fluoride channel function. Its function is as follows. Fluoride-specific ion channel. Important for reducing fluoride concentration in the cell, thus reducing its toxicity. The polypeptide is Fluoride-specific ion channel FluC (Chloroflexus aurantiacus (strain ATCC 29366 / DSM 635 / J-10-fl)).